Reading from the N-terminus, the 255-residue chain is 2,3-dehydroadipyl-CoA hydratase (255 aa).

This sequence belongs to the enoyl-CoA hydratase/isomerase family.

It catalyses the reaction a (3S)-3-hydroxyacyl-CoA = a (2E)-enoyl-CoA + H2O. The enzyme catalyses a 4-saturated-(3S)-3-hydroxyacyl-CoA = a (3E)-enoyl-CoA + H2O. The protein operates within aromatic compound metabolism; phenylacetate degradation. Functionally, catalyzes the reversible conversion of enzymatically produced 2,3-dehydroadipyl-CoA into 3-hydroxyadipyl-CoA. This Escherichia coli (strain K12) protein is 2,3-dehydroadipyl-CoA hydratase (paaF).